The primary structure comprises 505 residues: Probable bifunctional methylthioribulose-1-phosphate dehydratase/enolase-phosphatase E1 (505 aa).

The segment at 1–237 (MGLDKDGISN…ALKLHQLGLD (237 aa)) is methylthioribulose-1-phosphate dehydratase. C109 provides a ligand contact to substrate. Residues H127 and H129 each coordinate Zn(2+). Residue E152 is the Proton donor/acceptor; for methylthioribulose-1-phosphate dehydratase activity of the active site. Position 202 (H202) interacts with Zn(2+). The tract at residues 266-505 (FVLDIEGTTT…FRTAKSLLEL (240 aa)) is enolase-phosphatase E1. Mg(2+) is bound by residues D269 and E271. Substrate contacts are provided by residues 404–405 (SS) and K438. A Mg(2+)-binding site is contributed by D464.

This sequence in the N-terminal section; belongs to the aldolase class II family. MtnB subfamily. It in the C-terminal section; belongs to the HAD-like hydrolase superfamily. MasA/MtnC family. Zn(2+) serves as cofactor. Mg(2+) is required as a cofactor.

It carries out the reaction 5-(methylsulfanyl)-D-ribulose 1-phosphate = 5-methylsulfanyl-2,3-dioxopentyl phosphate + H2O. The enzyme catalyses 5-methylsulfanyl-2,3-dioxopentyl phosphate + H2O = 1,2-dihydroxy-5-(methylsulfanyl)pent-1-en-3-one + phosphate. The protein operates within amino-acid biosynthesis; L-methionine biosynthesis via salvage pathway; L-methionine from S-methyl-5-thio-alpha-D-ribose 1-phosphate: step 2/6. It functions in the pathway amino-acid biosynthesis; L-methionine biosynthesis via salvage pathway; L-methionine from S-methyl-5-thio-alpha-D-ribose 1-phosphate: step 3/6. Its pathway is amino-acid biosynthesis; L-methionine biosynthesis via salvage pathway; L-methionine from S-methyl-5-thio-alpha-D-ribose 1-phosphate: step 4/6. In Physcomitrium patens (Spreading-leaved earth moss), this protein is Probable bifunctional methylthioribulose-1-phosphate dehydratase/enolase-phosphatase E1.